The primary structure comprises 103 residues: Small ribosomal subunit protein uS14c (103 aa).

Positions lysine 34–asparagine 56 are disordered.

This sequence belongs to the universal ribosomal protein uS14 family. In terms of assembly, part of the 30S ribosomal subunit.

It is found in the plastid. It localises to the chloroplast. Functionally, binds 16S rRNA, required for the assembly of 30S particles. The protein is Small ribosomal subunit protein uS14c of Saccharum hybrid (Sugarcane).